Consider the following 787-residue polypeptide: (-)-kolavenyl diphosphate synthase, chloroplastic (787 aa).

The transit peptide at 1 to 47 (MSFATSLPRPTTTGAAGFGLPLATCISLSVSHSFSPKFGICNNTSLR) directs the protein to the chloroplast. Lysine 237 contributes to the substrate binding site. Mg(2+)-binding residues include aspartate 368 and aspartate 370. Positions 368–371 (DSDD) match the DXDD motif motif. Substrate is bound at residue lysine 454.

Belongs to the terpene synthase family. Tpsc subfamily. Mg(2+) is required as a cofactor. Expressed in peltate glandular trichomes of leaves. Highly expressed in the first leaf pair.

It is found in the plastid. The protein resides in the chloroplast. It carries out the reaction (2E,6E,10E)-geranylgeranyl diphosphate = (-)-kolavenyl diphosphate. Inhibited by high concentrations of magnesium. In terms of biological role, involved in the biosynthesis of clerodane diterpenoids natural products, including salvinorin A with potent agonistic activity on brain kappa-opioid receptors, thus conferring hallucinogenic properties. Diterpene synthase that catalyzes the formation of (-)-kolavenyl diphosphate from geranylgeranyl diphosphate (GGPP) as the first reaction in salvinorin A biosynthesis. The protein is (-)-kolavenyl diphosphate synthase, chloroplastic of Salvia divinorum (Maria pastora).